The following is a 174-amino-acid chain: Transcriptional repressor NrdR (174 aa).

A zinc finger lies at 3–34; sequence CPFCQHNDTRVIDSRVSEDGTTIRRRRECEAC. In terms of domain architecture, ATP-cone spans 49–139; that stretch reads PTVVKSDGGR…VYRSFQDVAD (91 aa).

It belongs to the NrdR family. Zn(2+) serves as cofactor.

In terms of biological role, negatively regulates transcription of bacterial ribonucleotide reductase nrd genes and operons by binding to NrdR-boxes. In Xanthomonas campestris pv. campestris (strain 8004), this protein is Transcriptional repressor NrdR.